The sequence spans 865 residues: Probable alpha/beta-glucosidase ARB_02101 (865 aa).

An N-terminal signal peptide occupies residues 1–21 (MFGRTLALAAVFATTVLSAAA). Residues N101 and N299 are each glycosylated (N-linked (GlcNAc...) asparagine). D428 serves as the catalytic Nucleophile. E431 is an active-site residue. N515 carries an N-linked (GlcNAc...) asparagine glycan. The active-site Proton donor is D548. 3 N-linked (GlcNAc...) asparagine glycosylation sites follow: N549, N585, and N748.

It belongs to the glycosyl hydrolase 31 family.

It localises to the secreted. It carries out the reaction Hydrolysis of terminal, non-reducing (1-&gt;4)-linked alpha-D-glucose residues with release of alpha-D-glucose.. It catalyses the reaction Hydrolysis of terminal, non-reducing beta-D-glucosyl residues with release of beta-D-glucose.. Functionally, glucosidase involved in the degradation of cellulosic biomass. Has both alpha- and beta-glucosidase activity. This Arthroderma benhamiae (strain ATCC MYA-4681 / CBS 112371) (Trichophyton mentagrophytes) protein is Probable alpha/beta-glucosidase ARB_02101.